A 672-amino-acid polypeptide reads, in one-letter code: UvrABC system protein B (672 aa).

The Helicase ATP-binding domain occupies 26–181; the sequence is AGLEDGLAYQ…ILQRLAELQY (156 aa). 39–46 contacts ATP; sequence GVTGSGKT. A Beta-hairpin motif is present at residues 92–115; it reads YYDYYQPEAYVPSSDTYIEKDASI. The region spanning 430–592 is the Helicase C-terminal domain; it reads QVDDLLSEIK…ITPKSIQKAV (163 aa). The region spanning 631 to 666 is the UVR domain; it reads AKELRKLEEQMYHHARNLEFEEAAAVRDKIQHIRKG.

It belongs to the UvrB family. As to quaternary structure, forms a heterotetramer with UvrA during the search for lesions. Interacts with UvrC in an incision complex.

The protein localises to the cytoplasm. The UvrABC repair system catalyzes the recognition and processing of DNA lesions. A damage recognition complex composed of 2 UvrA and 2 UvrB subunits scans DNA for abnormalities. Upon binding of the UvrA(2)B(2) complex to a putative damaged site, the DNA wraps around one UvrB monomer. DNA wrap is dependent on ATP binding by UvrB and probably causes local melting of the DNA helix, facilitating insertion of UvrB beta-hairpin between the DNA strands. Then UvrB probes one DNA strand for the presence of a lesion. If a lesion is found the UvrA subunits dissociate and the UvrB-DNA preincision complex is formed. This complex is subsequently bound by UvrC and the second UvrB is released. If no lesion is found, the DNA wraps around the other UvrB subunit that will check the other stand for damage. The protein is UvrABC system protein B of Coxiella burnetii (strain CbuG_Q212) (Coxiella burnetii (strain Q212)).